Here is a 638-residue protein sequence, read N- to C-terminus: Probable potassium transport system protein Kup (638 aa).

The tract at residues 1–20 (MQVEHEVATEGGQAPASSGH) is disordered. A run of 12 helical transmembrane segments spans residues 24-44 (IAGL…TSPL), 67-87 (ILSL…VVFI), 115-135 (AWWL…DGMI), 153-173 (PAFK…LFVM), 181-201 (VGAI…VLGI), 228-248 (LIGW…EALY), 263-283 (WFSL…ALIL), 301-321 (LVYP…QAVI), 353-373 (IYVP…VVGF), 382-402 (AYGI…FVVV), 413-433 (AVLF…ATTV), and 435-455 (IFAG…LLRT).

This sequence belongs to the HAK/KUP transporter (TC 2.A.72) family.

The protein resides in the cell inner membrane. The catalysed reaction is K(+)(in) + H(+)(in) = K(+)(out) + H(+)(out). Functionally, transport of potassium into the cell. Likely operates as a K(+):H(+) symporter. This is Probable potassium transport system protein Kup from Azoarcus sp. (strain BH72).